The sequence spans 421 residues: UDP-N-acetylglucosamine 1-carboxyvinyltransferase (421 aa).

22-23 (KN) contacts phosphoenolpyruvate. Arg93 is a binding site for UDP-N-acetyl-alpha-D-glucosamine. Cys117 acts as the Proton donor in catalysis. 2-(S-cysteinyl)pyruvic acid O-phosphothioketal is present on Cys117. UDP-N-acetyl-alpha-D-glucosamine contacts are provided by residues 122–126 (RPVDL), Asp308, and Val330.

Belongs to the EPSP synthase family. MurA subfamily.

The protein resides in the cytoplasm. The catalysed reaction is phosphoenolpyruvate + UDP-N-acetyl-alpha-D-glucosamine = UDP-N-acetyl-3-O-(1-carboxyvinyl)-alpha-D-glucosamine + phosphate. Its pathway is cell wall biogenesis; peptidoglycan biosynthesis. Functionally, cell wall formation. Adds enolpyruvyl to UDP-N-acetylglucosamine. This is UDP-N-acetylglucosamine 1-carboxyvinyltransferase from Pseudomonas aeruginosa (strain LESB58).